Here is a 35-residue protein sequence, read N- to C-terminus: Photosystem II reaction center protein Psb30 (35 aa).

The helical transmembrane segment at 7–27 (VFVQLALLALIVLAGPAVILL) threads the bilayer.

It belongs to the Psb30/Ycf12 family. In terms of assembly, PSII is composed of 1 copy each of membrane proteins PsbA, PsbB, PsbC, PsbD, PsbE, PsbF, PsbH, PsbI, PsbJ, PsbK, PsbL, PsbM, PsbT, PsbX, PsbY, PsbZ, Psb30/Ycf12, peripheral proteins PsbO, CyanoQ (PsbQ), PsbU, PsbV and a large number of cofactors. It forms dimeric complexes.

The protein localises to the cellular thylakoid membrane. Its function is as follows. A core subunit of photosystem II (PSII), probably helps stabilize the reaction center. This chain is Photosystem II reaction center protein Psb30, found in Synechococcus sp. (strain JA-2-3B'a(2-13)) (Cyanobacteria bacterium Yellowstone B-Prime).